The chain runs to 197 residues: Probable nicotinate-nucleotide adenylyltransferase (197 aa).

It belongs to the NadD family.

The enzyme catalyses nicotinate beta-D-ribonucleotide + ATP + H(+) = deamido-NAD(+) + diphosphate. The protein operates within cofactor biosynthesis; NAD(+) biosynthesis; deamido-NAD(+) from nicotinate D-ribonucleotide: step 1/1. Its function is as follows. Catalyzes the reversible adenylation of nicotinate mononucleotide (NaMN) to nicotinic acid adenine dinucleotide (NaAD). This chain is Probable nicotinate-nucleotide adenylyltransferase, found in Bordetella parapertussis (strain 12822 / ATCC BAA-587 / NCTC 13253).